The following is a 507-amino-acid chain: Aldehyde dehydrogenase 1, mitochondrial (507 aa).

A mitochondrion-targeting transit peptide spans 1-21 (MLATRNLVPIIRASIKWRIKL). NAD(+) is bound at residue 266-271 (GSTLVG). Active-site residues include glutamate 289 and cysteine 323.

The protein belongs to the aldehyde dehydrogenase family. Homotetramer.

It localises to the mitochondrion matrix. The catalysed reaction is an aldehyde + NAD(+) + H2O = a carboxylate + NADH + 2 H(+). The protein operates within alcohol metabolism; ethanol degradation; acetate from ethanol: step 2/2. The polypeptide is Aldehyde dehydrogenase 1, mitochondrial (ALD1) (Saccharomyces cerevisiae (Baker's yeast)).